The primary structure comprises 612 residues: MPKLRSATSTQGRNMAGARALWRATGMKENDFGKPIIAVVNSFTQFVPGHVHLKDMGQLVAAEIEKAGGVAKEFNTIAVDDGIAMGHGGMLYSLPSRDLIADSVEYMVNAHCADAMVCISNCDKITPGMLMAAMRLNIPTIFVSGGPMEAGKTKLSDQLIRLDLVDAMIEAADPNVSDERIDAIERSACPTCGSCSGMFTANSMNCLTEALGLSLPGNGSMLATHADRKELFLKAGRQIVELCKRYYEQDDASVLPRSIGTFDAFENAMSLDIAMGGSSNTVLHLLAAAQEAGMDFKMEDIDRLSRKVPCLSKIAPNTNKYHMEDVHRAGGIMGLLGELDRAGLIHKNTHTVLGMSMGEQLDQYDIIRNQDEELHKFFRAGPAGIRTTQAFSQDCRWDTVDNDRVNGCIRNKENAISQEGGLAVLFGNLAEDGCIVKTAGVDESIWKFTGTAIVFESQEDAVAGILGGKVKEGHVVVIRYEGPKGGPGMQEMLYPTSYLKSMGLGKKCALLTDGRFSGGTSGLSIGHASPEAASGGAIGLVRDGDIINIDIPNRAINLEISNDELATRRAEQDQKGWQPANREREVSFALKVFGHFATSADKGAVRDKTLLK.

Aspartate 81 is a Mg(2+) binding site. Residue cysteine 122 coordinates [2Fe-2S] cluster. Residues aspartate 123 and lysine 124 each contribute to the Mg(2+) site. At lysine 124 the chain carries N6-carboxylysine. Residue cysteine 195 participates in [2Fe-2S] cluster binding. Glutamate 491 provides a ligand contact to Mg(2+). Residue serine 517 is the Proton acceptor of the active site.

Belongs to the IlvD/Edd family. Homodimer. [2Fe-2S] cluster is required as a cofactor. It depends on Mg(2+) as a cofactor.

The catalysed reaction is (2R)-2,3-dihydroxy-3-methylbutanoate = 3-methyl-2-oxobutanoate + H2O. It catalyses the reaction (2R,3R)-2,3-dihydroxy-3-methylpentanoate = (S)-3-methyl-2-oxopentanoate + H2O. It participates in amino-acid biosynthesis; L-isoleucine biosynthesis; L-isoleucine from 2-oxobutanoate: step 3/4. It functions in the pathway amino-acid biosynthesis; L-valine biosynthesis; L-valine from pyruvate: step 3/4. In terms of biological role, functions in the biosynthesis of branched-chain amino acids. Catalyzes the dehydration of (2R,3R)-2,3-dihydroxy-3-methylpentanoate (2,3-dihydroxy-3-methylvalerate) into 2-oxo-3-methylpentanoate (2-oxo-3-methylvalerate) and of (2R)-2,3-dihydroxy-3-methylbutanoate (2,3-dihydroxyisovalerate) into 2-oxo-3-methylbutanoate (2-oxoisovalerate), the penultimate precursor to L-isoleucine and L-valine, respectively. This chain is Dihydroxy-acid dehydratase, found in Haemophilus influenzae (strain PittGG).